A 129-amino-acid chain; its full sequence is Follitropin subunit beta (129 aa).

The signal sequence occupies residues 1–18 (MKTLQFFFLFCCWKAICC). 6 cysteine pairs are disulfide-bonded: C21–C69, C35–C84, C38–C122, C46–C100, C50–C102, and C105–C112. N25 and N42 each carry an N-linked (GlcNAc...) asparagine glycan.

The protein belongs to the glycoprotein hormones subunit beta family. As to quaternary structure, heterodimer. The active follitropin is a heterodimer composed of an alpha chain/CGA shared with other hormones and a unique beta chain/FSHB shown here.

It localises to the secreted. Together with the alpha chain CGA constitutes follitropin, the follicle-stimulating hormone, and provides its biological specificity to the hormone heterodimer. Binds FSHR, a G protein-coupled receptor, on target cells to activate downstream signaling pathways. Follitropin is involved in follicle development and spermatogenesis in reproductive organs. This chain is Follitropin subunit beta (FSHB), found in Homo sapiens (Human).